The primary structure comprises 336 residues: Phosphate acyltransferase (336 aa).

This sequence belongs to the PlsX family. Homodimer. Probably interacts with PlsY.

The protein localises to the cytoplasm. The enzyme catalyses a fatty acyl-[ACP] + phosphate = an acyl phosphate + holo-[ACP]. Its pathway is lipid metabolism; phospholipid metabolism. Catalyzes the reversible formation of acyl-phosphate (acyl-PO(4)) from acyl-[acyl-carrier-protein] (acyl-ACP). This enzyme utilizes acyl-ACP as fatty acyl donor, but not acyl-CoA. The chain is Phosphate acyltransferase from Pseudomonas fluorescens (strain Pf0-1).